The primary structure comprises 350 residues: Chemokine C-C motif receptor-like 2 (350 aa).

At 1-43 the chain is on the extracellular side; it reads MANYTSAPEDDYDVFIEDDLSNDERELCSPYDPQALLAQLVPY. N-linked (GlcNAc...) asparagine glycosylation is present at asparagine 3. The helical transmembrane segment at 44 to 64 threads the bilayer; sequence LFITVFLVGLLDNILVVLIMV. Residues 65–74 lie on the Cytoplasmic side of the membrane; it reads KYKGLKQVEN. A helical transmembrane segment spans residues 75–95; sequence IYLLNLAVCNLCFLCTLPFWV. The Extracellular segment spans residues 96-110; it reads HMAWHEGDPGEPLCK. Cysteine 109 and cysteine 187 are disulfide-bonded. A helical membrane pass occupies residues 111–131; the sequence is ILLVLYSVGLFSEAFFNVLLT. Residues 132-149 are Cytoplasmic-facing; sequence VQRYQKFFQMRGFFSATR. The chain crosses the membrane as a helical span at residues 150 to 170; it reads MVAGSIFPSALVWVIAVLVML. The Extracellular portion of the chain corresponds to 171–204; the sequence is PELAFYKPQMENQKYKCFFGRPLFLPADETFWKH. A helical transmembrane segment spans residues 205 to 225; it reads FLTLKMNILGFLLPLFVFVFC. Residues 226-244 are Cytoplasmic-facing; the sequence is YVRMRRTLKFGERGYDLFK. Residues 245 to 265 form a helical membrane-spanning segment; the sequence is LVFTIMVVFLLMWGPYNIALF. Topologically, residues 266–288 are extracellular; sequence LSAFNEHFSLHGCESSHNLDRST. A helical transmembrane segment spans residues 289-309; sequence LITKIIATTHCCVNPLLYVFF. The Cytoplasmic portion of the chain corresponds to 310 to 350; sequence DEAFRKHLYHFCHLCNDTAPQPTEEPAQGTSREEPCLSTKM. The segment at 329-350 is disordered; sequence PQPTEEPAQGTSREEPCLSTKM.

It belongs to the G-protein coupled receptor 1 family.

Its subcellular location is the cell membrane. Its function is as follows. Receptor for CCL19 and chemerin/RARRES2. Does not appear to be a signaling receptor, but may have a role in modulating chemokine-triggered immune responses by capturing and internalizing CCL19 or by presenting RARRES2 ligand to CMKLR1, a functional signaling receptor. Plays a critical role for the development of Th2 responses. In Sus scrofa (Pig), this protein is Chemokine C-C motif receptor-like 2 (CCRL2).